We begin with the raw amino-acid sequence, 274 residues long: MSVQSAIKRKTAPDIRARKGGDPIVMLTSYHAHTASLVDRYCDVILVGDSLGNVMHGFETTVPVTLEMMILQGHAVMRGSQHALVVVDMPFGSYEASKEQAFHSAARILKETQCGAVKLEGGVRMAETIAFLTERGIPVMGHIGLTPQSINTLGSFRAQGREEGSWEPIEADARAVSDAGAFSVVVEAVAEPLGRKITETIAIPTIGIGASAACDGQVLVLEDMLGLSPRAPKFVKRYGELGPGIEAAIKGFAEEVRSRAFPGPEHVYGMKTKS.

Residues D49 and D88 each contribute to the Mg(2+) site. Residues 49–50, D88, and K118 contribute to the 3-methyl-2-oxobutanoate site; that span reads DS. E120 contributes to the Mg(2+) binding site. E187 serves as the catalytic Proton acceptor.

Belongs to the PanB family. Homodecamer; pentamer of dimers. Mg(2+) is required as a cofactor.

Its subcellular location is the cytoplasm. It catalyses the reaction 3-methyl-2-oxobutanoate + (6R)-5,10-methylene-5,6,7,8-tetrahydrofolate + H2O = 2-dehydropantoate + (6S)-5,6,7,8-tetrahydrofolate. It functions in the pathway cofactor biosynthesis; (R)-pantothenate biosynthesis; (R)-pantoate from 3-methyl-2-oxobutanoate: step 1/2. Its function is as follows. Catalyzes the reversible reaction in which hydroxymethyl group from 5,10-methylenetetrahydrofolate is transferred onto alpha-ketoisovalerate to form ketopantoate. This Rhodopseudomonas palustris (strain BisB5) protein is 3-methyl-2-oxobutanoate hydroxymethyltransferase.